We begin with the raw amino-acid sequence, 2593 residues long: Citrinin polyketide synthase (2593 aa).

Residues 70 to 224 are N-terminal acylcarrier protein transacylase domain (SAT); it reads KLLENLNAWI…YVSVIVDQRR (155 aa). Cysteine 139 functions as the Nucleophile; for transacylase activity in the catalytic mechanism. Histidine 258 serves as the catalytic Proton donor/acceptor; for transacylase activity. Residues 391 to 806 form the Ketosynthase family 3 (KS3) domain; it reads DERIAVIGMA…GSNASMVVTQ (416 aa). Active-site for beta-ketoacyl synthase activity residues include cysteine 555, histidine 690, and histidine 729. Positions 906 to 1191 are malonyl-CoA:ACP transacylase (MAT) domain; that stretch reads PDPKPVILCF…VAIWLEAGSN (286 aa). Positions 1291–1424 are N-terminal hotdog fold; sequence PKGLTTFVGY…GTITFQAADS (134 aa). In terms of domain architecture, PKS/mFAS DH spans 1291–1603; sequence PKGLTTFVGY…YQKVSISGIR (313 aa). The tract at residues 1322–1601 is product template (PT) domain; that stretch reads LLSGHIMANA…ISYQKVSISG (280 aa). Histidine 1326 acts as the Proton acceptor; for dehydratase activity in catalysis. The C-terminal hotdog fold stretch occupies residues 1451–1603; that stretch reads VADDILQGRN…YQKVSISGIR (153 aa). The active-site Proton donor; for dehydratase activity is the aspartate 1508. The tract at residues 1636–1662 is disordered; it reads VADSPLVDGSSTAVSGTPPTKKAPKAP. The region spanning 1661–1738 is the Carrier domain; the sequence is APSVDITGKM…SLVECMQRIL (78 aa). Serine 1689 carries the post-translational modification O-(pantetheine 4'-phosphoryl)serine. Residues tyrosine 1955, histidine 2067, and glutamate 2093 each act as for methyltransferase activity in the active site. The interval 1960 to 2134 is methyltransferase (CMeT) domain; it reads INAVWIQQAE…ATHWKKILTS (175 aa). The interval 2215-2459 is NADPH-binding (R) domain; the sequence is PAPTGHCVLV…KALPDFDGSL (245 aa).

Pantetheine 4'-phosphate is required as a cofactor.

It participates in mycotoxin biosynthesis. Non-reducing polyketide synthase; part of the gene cluster that mediates the biosynthesis of the mycotoxin citrinin, a hepato-nephrotoxic compound to humans due to inhibition of respiration complex III. The pathway begins with the synthesis of a keto-aldehyde intermediate by the citrinin PKS (pksCT) from successive condensations of 4 malonyl-CoA units, presumably with a simple acetyl-CoA starter unit. Release of the keto-aldehyde intermediate is consistent with the presence of the C-terminal reductive release domain. Mp11 collaborates with pksCT by catalyzing the hydrolysis of ACP-bound acyl intermediates to free the ACP from stalled intermediates. Mpl2 then catalyzes the oxidation of the C-12 methyl of the ketone intermediate to an alcohol intermediate which is further oxidized by the oxidoreductase mpl7 to produce a bisaldehyde intermediate. The fourth catalytic step is catalyzed by the mpl4 aldehyde dehydrogenase. The final transformation is the reduction of C-3 by mpl6 to provide the chemically stable citrinin nucleus. The polypeptide is Citrinin polyketide synthase (Monascus purpureus (Red mold)).